A 381-amino-acid chain; its full sequence is Prolargin (381 aa).

An N-terminal signal peptide occupies residues 1-21 (MRSSLCWLLTLLLILATAAQG). The disordered stretch occupies residues 19–65 (AQGQPTRRPRPRPRPRPRPRLRPTPSFPQPDEPTEPTDLPPPLPPGP). The segment covering 25–39 (RRPRPRPRPRPRPRL) has biased composition (basic residues). Residues 56–65 (DLPPPLPPGP) show a composition bias toward pro residues. LRR repeat units follow at residues 94 to 113 (RKVP…NNFI), 114 to 137 (TELP…NNRI), 138 to 161 (RKVD…KNQL), 162 to 182 (EEVP…QNQI), 183 to 206 (SRIP…HNKL), 207 to 232 (SDGV…HNTL), 233 to 253 (RKMP…SNRI), 254 to 277 (EAIP…YNQL), 278 to 302 (SDRG…HNRI), 303 to 322 (SSVP…NNSI), 323 to 361 (EKIN…GNYL), and 362 to 381 (KPPI…SVVI). A glycan (N-linked (GlcNAc...) asparagine) is linked at Asn-123. Asn-288, Asn-319, and Asn-326 each carry an N-linked (GlcNAc...) asparagine glycan. Residues Cys-331 and Cys-372 are joined by a disulfide bond.

It belongs to the small leucine-rich proteoglycan (SLRP) family. SLRP class II subfamily. Binds the basement membrane heparan sulfate proteoglycan perlecan and triple helical collagens type I and type II. In terms of processing, glycosylated; contains heparan sulfate.

It localises to the secreted. The protein localises to the extracellular space. The protein resides in the extracellular matrix. Its function is as follows. May anchor basement membranes to the underlying connective tissue. The polypeptide is Prolargin (PRELP) (Bos taurus (Bovine)).